The primary structure comprises 77 residues: Putative defensin-like protein 160 (77 aa).

The N-terminal stretch at 1 to 24 (MAKLSCSYFFILMLVFSALLMVEC) is a signal peptide. Disulfide bonds link Cys-30–Cys-77, Cys-40–Cys-59, Cys-45–Cys-71, and Cys-49–Cys-73.

This sequence belongs to the DEFL family.

Its subcellular location is the secreted. The polypeptide is Putative defensin-like protein 160 (LCR26) (Arabidopsis thaliana (Mouse-ear cress)).